Consider the following 191-residue polypeptide: Cytochrome c oxidase subunit 6b-1 (191 aa).

The span at Met1 to Glu14 shows a compositional bias: polar residues. Residues Met1–Phe126 are disordered. An N-acetylalanine modification is found at Ala2. Basic and acidic residues-rich tracts occupy residues Tyr16–Ala37 and Glu45–Ser56. The segment covering Ala72 to Glu98 has biased composition (low complexity). Residues Glu99 to Pro114 show a composition bias toward acidic residues. A CHCH domain is found at Thr134–Trp177. A Cx9C motif motif is present at residues Cys137 to Cys147. 2 cysteine pairs are disulfide-bonded: Cys137–Cys169 and Cys147–Cys158. Positions Cys158 to Cys169 match the Cx10C motif motif.

Belongs to the cytochrome c oxidase subunit 6B (TC 3.D.4.8) family. Expressed in the whole plant.

The protein resides in the mitochondrion. Its function is as follows. This protein is one of the nuclear-coded polypeptide chains of cytochrome c oxidase, the terminal oxidase in mitochondrial electron transport. This protein may be one of the heme-binding subunits of the oxidase. The chain is Cytochrome c oxidase subunit 6b-1 (COX6B-1) from Arabidopsis thaliana (Mouse-ear cress).